The primary structure comprises 603 residues: Serine/threonine-protein kinase PLK1 (603 aa).

The span at methionine 1 to alanine 15 shows a compositional bias: low complexity. The interval methionine 1–glycine 32 is disordered. Residue lysine 19 forms a Glycyl lysine isopeptide (Lys-Gly) (interchain with G-Cter in ubiquitin) linkage. Positions tyrosine 53 to phenylalanine 305 constitute a Protein kinase domain. ATP-binding positions include leucine 59–cysteine 67 and lysine 82. Serine 103 is modified (phosphoserine). Glutamate 131 contributes to the ATP binding site. Serine 137 carries the post-translational modification Phosphoserine. Aspartate 176 functions as the Proton acceptor in the catalytic mechanism. Residues lysine 178 to asparagine 181 and aspartate 194 each bind ATP. Residues aspartate 194–glutamate 221 form an activation loop region. At threonine 210 the chain carries Phosphothreonine; by AURKA. Threonine 214 carries the phosphothreonine modification. Serine 269 and serine 335 each carry phosphoserine; by autocatalysis. The short motif at arginine 337–leucine 340 is the D-box that targets the protein for proteasomal degradation in anaphase element. Lysine 338 participates in a covalent cross-link: Glycyl lysine isopeptide (Lys-Gly) (interchain with G-Cter in SUMO2). Positions lysine 338 to proline 361 are disordered. A compositionally biased stretch (basic and acidic residues) spans leucine 351 to proline 361. A phosphoserine mark is found at serine 375 and serine 450. The 79-residue stretch at tryptophan 410–glutamate 488 folds into the POLO box 1 domain. Lysine 492 participates in a covalent cross-link: Glycyl lysine isopeptide (Lys-Gly) (interchain with G-Cter in ubiquitin). Residues alanine 493–arginine 507 are linker. Threonine 498 is modified (phosphothreonine). Positions tyrosine 510–serine 592 constitute a POLO box 2 domain. The interval histidine 538 to lysine 540 is important for interaction with phosphorylated proteins.

Belongs to the protein kinase superfamily. Ser/Thr protein kinase family. CDC5/Polo subfamily. Interacts with CEP170 and EVI5. Interacts and phosphorylates ERCC6L. Interacts with FAM29A. Interacts with SLX4/BTBD12 and TTDN1. Interacts with BUB1B. Interacts (via POLO-box domain) with the phosphorylated form of BUB1, CENPU and CDC25C. Interacts with isoform 3 of SGO1. Interacts with BORA, KIF2A and AURKA. Interacts with TOPORS and CYLD. Interacts with ECT2; the interaction is stimulated upon phosphorylation of ECT2 on 'Thr-444'. Interacts with PRC1. Interacts with KIF20A/MKLP2 (when phosphorylated), leading to the recruitment at the central spindle. Interacts (via POLO box domains) with PPP1R12A/MYPT1 (when previously phosphorylated by CDK1). Part of an astrin (SPAG5)-kinastrin (SKAP) complex containing KNSTRN, SPAG5, PLK1, DYNLL1 and SGO2. Interacts with BIRC6/bruce. Interacts with CDK1-phosphorylated FRY; this interaction occurs in mitotic cells, but not in interphase cells. FRY interaction facilitates AURKA-mediated PLK1 phosphorylation. Interacts with CDK1-phosphorylated DCTN6 during mitotic prometaphase; the interaction facilitates recruitment to kinetochores. Interacts with CEP68; the interaction phosphorylates CEP68. Interacts (via POLO-box domain) with DCTN1. Interacts with CEP20 in later G1, S, G2 and M phases of the cell cycle; this interaction recruits PLK1 to centrosomes, a step required for S phase progression. Interacts with HSF1; this interaction increases upon heat shock but does not modulate neither HSF1 homotrimerization nor DNA-binding activities. Interacts with HNRNPU; this interaction induces phosphorylation of HNRNPU in mitosis. Interacts (via its N-terminus) with RIOK2. Interacts with KLHL22. Interacts (via POLO box domains) with NEDD9/HEF1 (via C-terminus). Interacts (via RVxF motif) with FIRRM; regulates PLK1 kinase activity. Interacts with SKA3; the interaction promotes the stability of PLK1. Interacts with the MTMR3:MTMR4 heterooligomer; brings CEP55 and PLK1 together during early mitosis, regulating the phosphorylation of CEP55 by PLK1 and its recruitment to the midbody where it can mediate cell abscission. Post-translationally, catalytic activity is enhanced by phosphorylation of Thr-210. Phosphorylation at Thr-210 is first detected on centrosomes in the G2 phase of the cell cycle, peaks in prometaphase and gradually disappears from centrosomes during anaphase. Dephosphorylation at Thr-210 at centrosomes is probably mediated by protein phosphatase 1C (PP1C), via interaction with PPP1R12A/MYPT1. Autophosphorylation and phosphorylation of Ser-137 may not be significant for the activation of PLK1 during mitosis, but may enhance catalytic activity during recovery after DNA damage checkpoint. Phosphorylated in vitro by STK10. In terms of processing, ubiquitinated by the anaphase promoting complex/cyclosome (APC/C) in anaphase and following DNA damage, leading to its degradation by the proteasome. Ubiquitination is mediated via its interaction with FZR1/CDH1. Ubiquitination and subsequent degradation prevents entry into mitosis and is essential to maintain an efficient G2 DNA damage checkpoint. Monoubiquitination at Lys-492 by the BCR(KLHL22) ubiquitin ligase complex does not lead to degradation: it promotes PLK1 dissociation from phosphoreceptor proteins and subsequent removal from kinetochores, allowing silencing of the spindle assembly checkpoint (SAC) and chromosome segregation.

The protein localises to the nucleus. The protein resides in the chromosome. It is found in the centromere. It localises to the kinetochore. Its subcellular location is the cytoplasm. The protein localises to the cytoskeleton. The protein resides in the microtubule organizing center. It is found in the centrosome. It localises to the spindle. Its subcellular location is the midbody. It carries out the reaction L-seryl-[protein] + ATP = O-phospho-L-seryl-[protein] + ADP + H(+). The catalysed reaction is L-threonyl-[protein] + ATP = O-phospho-L-threonyl-[protein] + ADP + H(+). With respect to regulation, activated by phosphorylation of Thr-210 by AURKA; phosphorylation by AURKA is enhanced by BORA. Once activated, activity is stimulated by binding target proteins. Binding of target proteins has no effect on the non-activated kinase. Several inhibitors targeting PLKs are currently in development and are under investigation in a growing number of clinical trials, such as BI 2536, an ATP-competitive PLK1 inhibitor or BI 6727, a dihydropteridinone that specifically inhibits the catalytic activity of PLK1. Serine/threonine-protein kinase that performs several important functions throughout M phase of the cell cycle, including the regulation of centrosome maturation and spindle assembly, the removal of cohesins from chromosome arms, the inactivation of anaphase-promoting complex/cyclosome (APC/C) inhibitors, and the regulation of mitotic exit and cytokinesis. Polo-like kinase proteins act by binding and phosphorylating proteins that are already phosphorylated on a specific motif recognized by the POLO box domains. Phosphorylates BORA, BUB1B/BUBR1, CCNB1, CDC25C, CEP55, ECT2, ERCC6L, FBXO5/EMI1, FOXM1, KIF20A/MKLP2, CENPU, NEDD1, NINL, NPM1, NUDC, PKMYT1/MYT1, KIZ, PPP1R12A/MYPT1, PRC1, RACGAP1/CYK4, RHNO1, SGO1, STAG2/SA2, TEX14, TOPORS, p73/TP73, TPT1, WEE1 and HNRNPU. Plays a key role in centrosome functions and the assembly of bipolar spindles by phosphorylating KIZ, NEDD1 and NINL. NEDD1 phosphorylation promotes subsequent targeting of the gamma-tubulin ring complex (gTuRC) to the centrosome, an important step for spindle formation. Phosphorylation of NINL component of the centrosome leads to NINL dissociation from other centrosomal proteins. Involved in mitosis exit and cytokinesis by phosphorylating CEP55, ECT2, KIF20A/MKLP2, CENPU, PRC1 and RACGAP1. Recruited at the central spindle by phosphorylating and docking PRC1 and KIF20A/MKLP2; creates its own docking sites on PRC1 and KIF20A/MKLP2 by mediating phosphorylation of sites subsequently recognized by the POLO box domains. Phosphorylates RACGAP1, thereby creating a docking site for the Rho GTP exchange factor ECT2 that is essential for the cleavage furrow formation. Promotes the central spindle recruitment of ECT2. Plays a central role in G2/M transition of mitotic cell cycle by phosphorylating CCNB1, CDC25C, FOXM1, CENPU, PKMYT1/MYT1, PPP1R12A/MYPT1 and WEE1. Part of a regulatory circuit that promotes the activation of CDK1 by phosphorylating the positive regulator CDC25C and inhibiting the negative regulators WEE1 and PKMYT1/MYT1. Also acts by mediating phosphorylation of cyclin-B1 (CCNB1) on centrosomes in prophase. Phosphorylates FOXM1, a key mitotic transcription regulator, leading to enhance FOXM1 transcriptional activity. Involved in kinetochore functions and sister chromatid cohesion by phosphorylating BUB1B/BUBR1, FBXO5/EMI1 and STAG2/SA2. PLK1 is high on non-attached kinetochores suggesting a role of PLK1 in kinetochore attachment or in spindle assembly checkpoint (SAC) regulation. Required for kinetochore localization of BUB1B. Regulates the dissociation of cohesin from chromosomes by phosphorylating cohesin subunits such as STAG2/SA2. Phosphorylates SGO1: required for spindle pole localization of isoform 3 of SGO1 and plays a role in regulating its centriole cohesion function. Mediates phosphorylation of FBXO5/EMI1, a negative regulator of the APC/C complex during prophase, leading to FBXO5/EMI1 ubiquitination and degradation by the proteasome. Acts as a negative regulator of p53 family members: phosphorylates TOPORS, leading to inhibit the sumoylation of p53/TP53 and simultaneously enhance the ubiquitination and subsequent degradation of p53/TP53. Phosphorylates the transactivation domain of the transcription factor p73/TP73, leading to inhibit p73/TP73-mediated transcriptional activation and pro-apoptotic functions. Phosphorylates BORA, and thereby promotes the degradation of BORA. Contributes to the regulation of AURKA function. Also required for recovery after DNA damage checkpoint and entry into mitosis. Phosphorylates MISP, leading to stabilization of cortical and astral microtubule attachments required for proper spindle positioning. Together with MEIKIN, acts as a regulator of kinetochore function during meiosis I: required both for mono-orientation of kinetochores on sister chromosomes and protection of centromeric cohesin from separase-mediated cleavage. Phosphorylates CEP68 and is required for its degradation. Regulates nuclear envelope breakdown during prophase by phosphorylating DCTN1 resulting in its localization in the nuclear envelope. Phosphorylates the heat shock transcription factor HSF1, promoting HSF1 nuclear translocation upon heat shock. Phosphorylates HSF1 also in the early mitotic period; this phosphorylation regulates HSF1 localization to the spindle pole, the recruitment of the SCF(BTRC) ubiquitin ligase complex induicing HSF1 degradation, and hence mitotic progression. Regulates mitotic progression by phosphorylating RIOK2. Through the phosphorylation of DZIP1 regulates the localization during mitosis of the BBSome, a ciliary protein complex involved in cilium biogenesis. Regulates DNA repair during mitosis by mediating phosphorylation of POLQ and RHNO1, thereby promoting POLQ recruitment to DNA damage sites. Phosphorylates ATXN10 which may play a role in the regulation of cytokinesis and may stimulate the proteasome-mediated degradation of ATXN10. This chain is Serine/threonine-protein kinase PLK1 (Plk1), found in Rattus norvegicus (Rat).